The sequence spans 582 residues: Transcription factor PCF5 (582 aa).

Disordered regions lie at residues 30-78 (AAGK…QHDH) and 123-195 (SPMG…GGGG). The segment covering 51 to 64 (GGDGGGVGGGGSGG) has biased composition (gly residues). A TCP domain is found at 213–271 (RKDRHSKVCTARGPRDRRVRLSAHTAIQFYDVQDRLGYDRPSKAVDWLIKNAKDAIDKL). Disordered regions lie at residues 283 to 306 (GAGA…ENSD), 402 to 423 (MFHH…TTQQ), and 548 to 582 (RLPA…ASHH).

As to quaternary structure, forms homodimers and heterodimers with PCF2.

The protein localises to the nucleus. Transcription activator. Binds the promoter core sequence 5'-GGNCC-3'. The sequence is that of Transcription factor PCF5 (PCF5) from Oryza sativa subsp. indica (Rice).